The following is a 252-amino-acid chain: MSDIDDEEFEQLAVSALEEVEKKAGFAQQPTPQKVSRVTAHSILVNPRQKGNPLLPHVRNVPWEYTDIVPDFVMGTGICSLFLSLKYHHLHPEYIYSRISKLGKSYNLRILLILVDVENHQASIQELVKTSIVNQYTLILAWSSEEAARYLETYKAYENMSPALIMEKPSTDYLSQVQSFLTSIRGINKSDSLSLLSKFGSLERALVASRDELEQLEGWGPTKVNRFLEAVQQPFMSHSTIKRPEAINLKQT.

Residues threonine 76–arginine 98 mediate DNA binding.

Belongs to the ERCC1/RAD10/SWI10 family. Heterodimer composed of rad16 and swi10.

The protein resides in the nucleus. Involved in termination of copy-synthesis during mating-type switching. Involved in nucleotide excision repair of DNA damaged with UV light, bulky adducts, or cross-linking agents. Along with RAD16 forms an endonuclease that specifically degrades single-stranded DNA. In Schizosaccharomyces pombe (strain 972 / ATCC 24843) (Fission yeast), this protein is Mating-type switching protein swi10 (swi10).